Consider the following 1819-residue polypeptide: Gamma-tubulin complex component 6 (1819 aa).

Disordered regions lie at residues 810 to 889 (SEAH…GARP), 929 to 951 (LPPSAPGEAPAAASTQPSRPQEY), and 1000 to 1023 (RETLLPSHPPRRAALEEGSSQPTE). 9 tandem repeats follow at residues 1027 to 1053 (GQVSGGGLPTGDYASEIAPTRPRWNTH), 1054 to 1080 (GHVSDASIRVGENVSDVAPTQPRWNTH), 1081 to 1107 (GHVSNASISLGESVSDVAPTRPRWNIH), 1108 to 1134 (GHVSNASIRVGENVSDVAPTRPRWNTH), 1135 to 1161 (GHVSNASIRVGENVSDVAPTRPRWNTH), 1162 to 1188 (GHVSDASISLGESVSDMAPARPRWNTH), 1189 to 1215 (GHVSDASISLGESVSDMAPTRPRWNTH), 1216 to 1242 (GHVSDTSIRVGENVSDVAPIRSRCNTH), and 1243 to 1269 (GHVSDASISLGEPVSDVVSTRPRWNTH). The segment at 1027–1269 (GQVSGGGLPT…VSTRPRWNTH (243 aa)) is 9 X 27 AA tandem repeats. A disordered region spans residues 1271–1412 (PIPPPHMVLG…EAEASAAEAQ (142 aa)). The span at 1297–1314 (PPGHTSQSALSLGAQSTV) shows a compositional bias: polar residues. Positions 1321–1335 (LPVEVGPSLSSPSSG) are enriched in low complexity. Residues 1384–1398 (WPLNSQEDTAAQSSP) show a composition bias toward polar residues.

The protein belongs to the TUBGCP family. As to quaternary structure, component of the gamma-tubulin ring complex (gTuRC) consisting of TUBGCP2, TUBGCP3, TUBGCP4, TUBGCP5 and TUBGCP6 and gamma-tubulin TUBG1 or TUBG2. TUBGCP2, TUBGCP3, TUBGCP4, TUBGCP5 and TUBGCP6 assemble in a 5:5:2:1:1 stoichiometry; each is associated with a gamma-tubulin, thereby arranging 14 gamma-tubulins in a helical manner. Gamma-tubulin at the first position is blocked by TUBGCP3 at the last position, allowing 13 protafilaments to grow into a microtubule. The gTuRC (via TUBGCP3 and TUBGCP6) interacts with ACTB and MZT1; the interactions form a luminal bridge that stabilizes the initial structure during complex assembly. The gTuRC (via TUBGCP2) interacts with MZT2A/MZT2B and CDK5RAP2 (via CM1 motif); the interactions play a role in gTuRC activation.

The protein localises to the cytoplasm. Its subcellular location is the cytoskeleton. It is found in the microtubule organizing center. The protein resides in the centrosome. In terms of biological role, component of the gamma-tubulin ring complex (gTuRC) which mediates microtubule nucleation. The gTuRC regulates the minus-end nucleation of alpha-beta tubulin heterodimers that grow into microtubule protafilaments, a critical step in centrosome duplication and spindle formation. This Homo sapiens (Human) protein is Gamma-tubulin complex component 6 (TUBGCP6).